Reading from the N-terminus, the 113-residue chain is Protein Rev (113 aa).

The tract at residues 15-23 is homomultimerization; sequence LIKFLYQSN. The disordered stretch occupies residues 17–45; that stretch reads KFLYQSNPPPSPEGTRQARRNRRRRWRQR. A Nuclear localization signal and RNA-binding (RRE) motif is present at residues 31 to 47; the sequence is TRQARRNRRRRWRQRQR. The segment covering 33–45 has biased composition (basic residues); it reads QARRNRRRRWRQR. The Nuclear export signal and binding to XPO1 motif lies at 70-81; the sequence is LQLPPLERLTLD. Residues serine 89 and serine 96 each carry the phosphoserine; by host modification. Positions 89–113 are disordered; that stretch reads SGTQGVGSPQILVESPTILESGTKE.

The protein belongs to the HIV-1 REV protein family. In terms of assembly, homomultimer; when bound to the RRE. Multimeric assembly is essential for activity and may involve XPO1. Binds to human KPNB1, XPO1, TNPO1, RANBP5 and IPO7. Interacts with the viral Integrase. Interacts with human KHDRBS1. Interacts with human NAP1; this interaction decreases Rev multimerization and stimulates its activity. Interacts with human DEAD-box helicases DDX3 and DDX24; these interactions may serve for viral RNA export to the cytoplasm and packaging, respectively. Interacts with human PSIP1; this interaction may inhibit HIV-1 DNA integration by promoting dissociation of the Integrase-LEDGF/p75 complex. In terms of processing, asymmetrically arginine dimethylated at one site by host PRMT6. Methylation impairs the RNA-binding activity and export of viral RNA from the nucleus to the cytoplasm. Post-translationally, phosphorylated by protein kinase CK2. Presence of, and maybe binding to the N-terminus of the regulatory beta subunit of CK2 is necessary for CK2-mediated Rev's phosphorylation.

The protein resides in the host nucleus. Its subcellular location is the host nucleolus. It localises to the host cytoplasm. Escorts unspliced or incompletely spliced viral pre-mRNAs (late transcripts) out of the nucleus of infected cells. These pre-mRNAs carry a recognition sequence called Rev responsive element (RRE) located in the env gene, that is not present in fully spliced viral mRNAs (early transcripts). This function is essential since most viral proteins are translated from unspliced or partially spliced pre-mRNAs which cannot exit the nucleus by the pathway used by fully processed cellular mRNAs. Rev itself is translated from a fully spliced mRNA that readily exits the nucleus. Rev's nuclear localization signal (NLS) binds directly to KPNB1/Importin beta-1 without previous binding to KPNA1/Importin alpha-1. KPNB1 binds to the GDP bound form of RAN (Ran-GDP) and targets Rev to the nucleus. In the nucleus, the conversion from Ran-GDP to Ran-GTP dissociates Rev from KPNB1 and allows Rev's binding to the RRE in viral pre-mRNAs. Rev multimerization on the RRE via cooperative assembly exposes its nuclear export signal (NES) to the surface. Rev can then form a complex with XPO1/CRM1 and Ran-GTP, leading to nuclear export of the complex. Conversion from Ran-GTP to Ran-GDP mediates dissociation of the Rev/RRE/XPO1/RAN complex, so that Rev can return to the nucleus for a subsequent round of export. Beside KPNB1, also seems to interact with TNPO1/Transportin-1, RANBP5/IPO5 and IPO7/RANBP7 for nuclear import. The nucleoporin-like HRB/RIP is an essential cofactor that probably indirectly interacts with Rev to release HIV RNAs from the perinuclear region to the cytoplasm. This chain is Protein Rev, found in Human immunodeficiency virus type 1 group M subtype B (isolate JH32) (HIV-1).